The chain runs to 1744 residues: Probable disease resistance protein At4g19520 (1744 aa).

The region spanning 3-163 (DGKEVYISFN…KIVADVRQKL (161 aa)) is the TIR 1 domain. Residue E80 is part of the active site. Positions 192 to 411 (SLGIWGMAGI…VSEKEIFLDI (220 aa)) constitute an NB-ARC domain. 20 LRR repeats span residues 503-526 (YEDVKAINLDTSNLPFKGHIAFQH), 557-581 (PPELRLLHWTCYPLHSFPQNFGFQY), 583-602 (VELNMPCSKLKKLWGGTKNL), 603-626 (EVLKRITLSCSVQLLNVDELQYSP), 648-669 (LQHLRIVDLSTCKKIKSFPKVP), 670-692 (PSIRKLHLQGTGIRDLSSLNHSS), 710-733 (DHRKQVLKLKDSSHLGSLPDIVIF), 734-754 (ESLEVLDFSGCSELEDIQGFP), 755-777 (QNLKRLYLAKTAIKEVPSSLCHH), 779-802 (SKLVKLDMENCERLRDLPMGMSNM), 804-823 (YLAVLKLSGCSNLENIKELP), 824-846 (RNLKELYLAGTAVKEFPSTLLET), 848-871 (SEVVLLDLENCKKLQGLPTGMSKL), 892-915 (PLNLIELYLAGTAIRELPPSIGDL), 917-939 (LLDTLDLKNCNRLRHLPMEMHNL), 941-963 (PLKVLDLSNCSELEVFTSSLPKV), 987-1010 (YEHRVTLSLYKARLQYIPEEIRWM), 1011-1035 (PSLKTLDLSRNGFTEVPVSIKDFSK), 1037-1059 (LSLRLRYCENLRSLPQLPRSLQL), and 1062-1086 (AHGCSSLQLITPDFKQLPRYYTFSN). In terms of domain architecture, TIR 2 spans 1399 to 1559 (RNNDVFVSFH…KVANDIRKKL (161 aa)).

The protein belongs to the disease resistance TIR-NB-LRR family.

It catalyses the reaction NAD(+) + H2O = ADP-D-ribose + nicotinamide + H(+). Its function is as follows. Probable disease resistance protein. The polypeptide is Probable disease resistance protein At4g19520 (Arabidopsis thaliana (Mouse-ear cress)).